Reading from the N-terminus, the 94-residue chain is Co-chaperonin GroES (94 aa).

The protein belongs to the GroES chaperonin family. In terms of assembly, heptamer of 7 subunits arranged in a ring. Interacts with the chaperonin GroEL.

It is found in the cytoplasm. In terms of biological role, together with the chaperonin GroEL, plays an essential role in assisting protein folding. The GroEL-GroES system forms a nano-cage that allows encapsulation of the non-native substrate proteins and provides a physical environment optimized to promote and accelerate protein folding. GroES binds to the apical surface of the GroEL ring, thereby capping the opening of the GroEL channel. In Finegoldia magna (strain ATCC 29328 / DSM 20472 / WAL 2508) (Peptostreptococcus magnus), this protein is Co-chaperonin GroES.